A 434-amino-acid chain; its full sequence is ATP-dependent RNA helicase SUB2 (434 aa).

Positions Met1–Asn16 are enriched in acidic residues. Residues Met1–Ala32 are disordered. A Q motif motif is present at residues Thr50–Gln78. A Helicase ATP-binding domain is found at Ile81–His256. ATP is bound at residue Ala94 to Thr101. Positions Asp203 to Asp206 match the DEAD box motif. The region spanning Gly268 to Ser429 is the Helicase C-terminal domain.

It belongs to the DEAD box helicase family. DECD subfamily.

The protein localises to the nucleus. It catalyses the reaction ATP + H2O = ADP + phosphate + H(+). Functionally, ATP-binding RNA helicase involved in transcription elongation and required for the export of mRNA out of the nucleus. SUB2 also plays a role in pre-mRNA splicing and spliceosome assembly. May be involved in rDNA and telomeric silencing, and maintenance of genome integrity. The protein is ATP-dependent RNA helicase SUB2 (SUB2) of Chaetomium globosum (strain ATCC 6205 / CBS 148.51 / DSM 1962 / NBRC 6347 / NRRL 1970) (Soil fungus).